A 323-amino-acid chain; its full sequence is Peroxisome biogenesis protein 20 (323 aa).

A Glycyl cysteine thioester (Cys-Gly) (interchain with G-Cter in ubiquitin) cross-link involves residue C8. K19 is covalently cross-linked (Glycyl lysine isopeptide (Lys-Gly) (interchain with G-Cter in ubiquitin)). Short sequence motifs (wxxxF/Y motif) lie at residues 89-93 (WSSEF), 102-105 (WVED), and 141-145 (WTQEF).

The protein belongs to the peroxisomal targeting signal receptor family. In terms of assembly, interacts (via WxxxF/Y and LVxEF motifs) with PEX14; promoting translocation through the PEX13-PEX14 docking complex. Interacts with PEX7. Post-translationally, monoubiquitinated at Cys-8 by PEX2 during PEX20 passage through the PEX2-PEX10-PEX12 retrotranslocation channel: monoubiquitination acts as a signal for PEX20 extraction and is required for proper export from peroxisomes and recycling. When PEX5 recycling is compromised, polyubiquitinated at Lys-19 by PEX10 during its passage through the retrotranslocation channel, leading to its degradation.

The protein localises to the cytoplasm. It is found in the cytosol. Its subcellular location is the peroxisome matrix. Its function is as follows. Coreceptor required for the peroxisomal import of proteins containing a C-terminal PTS2-type peroxisomal targeting signal, such as 3-oxoacyl-CoA thiolase. Acts via its interaction with PEX7, promoting association between PEX7 bound to cargo proteins and the PEX13-PEX14 docking complex. PEX20 along with PEX7 and PTS2-containing cargo proteins are tranlocated into peroxisomes by passing through the PEX13-PEX14 docking complex. PEX20 coreceptor is then retrotranslocated into the cytosol, leading to release of bound cargo in the peroxisome matrix, and reset for a subsequent peroxisome import cycle. Also mediates peroxisomal import of proteins that do not contain PTS1- or PTS2-type peroxisomal targeting signals, such as acyl-CoA oxidases (Aox) izozymes. Import of acyl-CoA oxidases (Aox) izozymes is independent of PEX7. Required for PEX7 ubiquitination. This is Peroxisome biogenesis protein 20 from Komagataella pastoris (Yeast).